A 550-amino-acid chain; its full sequence is Chaperonin GroEL (550 aa).

Residues 30–33, Lys51, 87–91, Gly415, and Asp495 contribute to the ATP site; these read TLGP and DGTTT.

It belongs to the chaperonin (HSP60) family. As to quaternary structure, forms a cylinder of 14 subunits composed of two heptameric rings stacked back-to-back. Interacts with the co-chaperonin GroES.

The protein localises to the cytoplasm. The catalysed reaction is ATP + H2O + a folded polypeptide = ADP + phosphate + an unfolded polypeptide.. Its function is as follows. Together with its co-chaperonin GroES, plays an essential role in assisting protein folding. The GroEL-GroES system forms a nano-cage that allows encapsulation of the non-native substrate proteins and provides a physical environment optimized to promote and accelerate protein folding. This Shewanella piezotolerans (strain WP3 / JCM 13877) protein is Chaperonin GroEL.